The primary structure comprises 310 residues: Olfactory receptor 2A25 (310 aa).

The Extracellular portion of the chain corresponds to 1–24; it reads MGGNQTSITEFLLLGFPIGPRIQM. Residue Asn-4 is glycosylated (N-linked (GlcNAc...) asparagine). Residues 25–48 traverse the membrane as a helical segment; the sequence is LLFGLFSLFYIFILLGNGTILGLI. Residues 49-56 are Cytoplasmic-facing; it reads SLDSRLHT. Residues 57–78 form a helical membrane-spanning segment; sequence PMYFFLSHLAVVDIACACSTVP. The Extracellular portion of the chain corresponds to 79–99; the sequence is QMLVNLLHPAKPISFAGCMTQ. Cysteines 96 and 188 form a disulfide. The chain crosses the membrane as a helical span at residues 100–119; that stretch reads MFLFLSFAHTECLLLVVMSY. Topologically, residues 120 to 138 are cytoplasmic; the sequence is DRYVAICHPLRYSTIMTWK. A helical membrane pass occupies residues 139–157; it reads VCITLALTSWILGVLLALV. Residues 158–195 are Extracellular-facing; it reads HLVLLLPLSFCGPQKLNHFFCEIMAVLKLACADTHINE. Residues 196-218 form a helical membrane-spanning segment; sequence VMVLAGAVSVLVGAFFSTVISYV. The Cytoplasmic segment spans residues 219–235; the sequence is HILCAILKIQSGEGCQK. The helical transmembrane segment at 236–258 threads the bilayer; that stretch reads AFSICSSHLCVVGLFYGTAIIMY. Topologically, residues 259–271 are extracellular; it reads VEPQYESPKEQKK. Residues 272–291 form a helical membrane-spanning segment; sequence YLLLFHSLFNPMLNPLIYSL. The Cytoplasmic portion of the chain corresponds to 292-310; that stretch reads RNKEVQGTLKRMLEKKRTS.

This sequence belongs to the G-protein coupled receptor 1 family.

The protein resides in the cell membrane. Odorant receptor. The sequence is that of Olfactory receptor 2A25 (OR2A25) from Homo sapiens (Human).